A 161-amino-acid polypeptide reads, in one-letter code: uncharacterized protein (161 aa).

Disordered regions lie at residues 1–67 (MNSN…IQNF) and 80–147 (DSHQ…KKKQ). Residues 84–126 (NFNDNGFNNNNNNNNSNMNHNFSNQNNYNNNNNNNNNNNSNFN) show a composition bias toward low complexity. The span at 135–147 (GTSSQVGNNKKKQ) shows a compositional bias: polar residues.

This is an uncharacterized protein from Dictyostelium discoideum (Social amoeba).